A 48-amino-acid polypeptide reads, in one-letter code: 2-deoxy-glucose resistant protein 1, mitochondrial (48 aa).

The N-terminal 28 residues, 1-28 (MQVGFVSQTNCRSFPACIVFLFQMSQRQ), are a transit peptide targeting the mitochondrion.

The protein localises to the mitochondrion. The chain is 2-deoxy-glucose resistant protein 1, mitochondrial (DGR1) from Saccharomyces cerevisiae (strain ATCC 204508 / S288c) (Baker's yeast).